The following is a 431-amino-acid chain: Enolase (431 aa).

Gln167 lines the (2R)-2-phosphoglycerate pocket. Residue Glu209 is the Proton donor of the active site. Positions 246, 289, and 316 each coordinate Mg(2+). Residues Lys341, Arg370, Ser371, and Lys392 each coordinate (2R)-2-phosphoglycerate. The active-site Proton acceptor is Lys341.

This sequence belongs to the enolase family. Component of the RNA degradosome, a multiprotein complex involved in RNA processing and mRNA degradation. The cofactor is Mg(2+).

It localises to the cytoplasm. The protein localises to the secreted. The protein resides in the cell surface. The catalysed reaction is (2R)-2-phosphoglycerate = phosphoenolpyruvate + H2O. The protein operates within carbohydrate degradation; glycolysis; pyruvate from D-glyceraldehyde 3-phosphate: step 4/5. In terms of biological role, catalyzes the reversible conversion of 2-phosphoglycerate (2-PG) into phosphoenolpyruvate (PEP). It is essential for the degradation of carbohydrates via glycolysis. The polypeptide is Enolase (Shewanella oneidensis (strain ATCC 700550 / JCM 31522 / CIP 106686 / LMG 19005 / NCIMB 14063 / MR-1)).